Reading from the N-terminus, the 164-residue chain is UPF0114 protein YqhA (164 aa).

Helical transmembrane passes span 10–32, 53–75, and 136–155; these read YASRWLLAPVYFGLSLALIALAL, LILVLLSLVDMTLVGGLLVMVMF, and LMWYVIIHLTFVLSAFVMGY.

Belongs to the UPF0114 family.

The protein localises to the cell membrane. The sequence is that of UPF0114 protein YqhA from Salmonella typhi.